A 251-amino-acid polypeptide reads, in one-letter code: Chloride intracellular channel protein 5 (251 aa).

Residues 1-98 are required for insertion into the membrane; sequence MTDSATTNGD…EEFLEETLTP (98 aa). The short motif at 32–35 is the G-site element; the sequence is CPFS. The chain crosses the membrane as a helical span at residues 34-54; that stretch reads FSQRLFMILWLKGVVFNVTTV. In terms of domain architecture, GST C-terminal spans 101–241; that stretch reads YPKLAAKHRE…AADSEIELAY (141 aa).

This sequence belongs to the chloride channel CLIC family. In terms of assembly, component of a multimeric complex consisting of several cytoskeletal proteins, including actin, ezrin, alpha-actinin, gelsolin, and IQGAP1. Interacts with AKAP9. Interacts with TPRN. TPRN, CLIC5 and PTPQR form concentric rings at the base of stereocilia and may form a complex. Interacts with EZR, MYO6 and RDX; the proteins may work together as a complex to stabilize linkages between the plasma membrane and subjacent actin cytoskeleton at the stereocilium base. As to expression, detected in lung and inner ear. Detected in embryonic cochlea, on microvilli-covered apical surfaces of interdental cells, columnar cells of Kolliker's organ, and on stereocilia of inner and outer hair cells (at protein level). Also detected in the eye, where it localizes to lens fiber cells in the lens epithelium (at protein level).

It is found in the golgi apparatus. It localises to the cytoplasm. Its subcellular location is the cytoskeleton. The protein resides in the microtubule organizing center. The protein localises to the centrosome. It is found in the cell cortex. It localises to the membrane. Its subcellular location is the apical cell membrane. The protein resides in the mitochondrion. The protein localises to the cell projection. It is found in the stereocilium. The enzyme catalyses Na(+)(in) = Na(+)(out). The catalysed reaction is K(+)(in) = K(+)(out). It carries out the reaction chloride(in) = chloride(out). With respect to regulation, inhibited by F-actin. Its function is as follows. In the soluble state, catalyzes glutaredoxin-like thiol disulfide exchange reactions with reduced glutathione as electron donor. Can insert into membranes and form non-selective ion channels almost equally permeable to Na(+), K(+) and Cl(-). Required for normal hearing. Necessary for the formation of stereocilia in the inner ear and normal development of the organ of Corti. Required for the proper localization of PTPRQ and RDX to the stereocilium base during postnatal maturation of hair bundles. Can insert into membranes and form poorly selective ion channels that may also transport chloride ions. Required for the development and/or maintenance of the proper glomerular endothelial cell and podocyte architecture. Plays a role in formation of the lens suture in the eye, which is important for normal optical properties of the lens. The polypeptide is Chloride intracellular channel protein 5 (Clic5) (Mus musculus (Mouse)).